Reading from the N-terminus, the 453-residue chain is Choline kinase alpha (453 aa).

The tract at residues 22 to 81 (CGGNAAPTPGVGQQRDAAGELESKQLGGRTQPLALPPPPPPPLPLPPPPSPPLADEQPEP) is disordered. Over residues 55–73 (ALPPPPPPPLPLPPPPSPP) the composition is skewed to pro residues. The residue at position 71 (Ser71) is a Phosphoserine. ATP-binding positions include 113 to 119 (RGGLSNM), Arg142, and 203 to 209 (QFIPSRR). 115–117 (GLS) lines the phosphocholine pocket. The residue at position 243 (Lys243) is an N6-acetyllysine. Position 275 is a phosphoserine (Ser275). The ATP site is built by Gln304 and Asp326.

The protein belongs to the choline/ethanolamine kinase family. In terms of assembly, homodimer. Heterodimer with CHKB. As to quaternary structure, monomer; acetylation by KAT5 promotes dissociation of the homodimer and monomerization. In terms of processing, phosphorylated at Ser-275 by AMPK in response to glucose deprivation, leading to localization to lipid droplets. Acetylated by KAT5 at Lys-243 following phosphorylation by AMPK, leading to monomerization and conversion into a tyrosine-protein kinase. In terms of tissue distribution, expressed ubiquitously with the highest level in testis.

The protein resides in the cytoplasm. It localises to the cytosol. The protein localises to the lipid droplet. The catalysed reaction is choline + ATP = phosphocholine + ADP + H(+). It catalyses the reaction ethanolamine + ATP = phosphoethanolamine + ADP + H(+). The enzyme catalyses L-tyrosyl-[protein] + ATP = O-phospho-L-tyrosyl-[protein] + ADP + H(+). Its pathway is phospholipid metabolism; phosphatidylcholine biosynthesis; phosphocholine from choline: step 1/1. It participates in phospholipid metabolism; phosphatidylethanolamine biosynthesis; phosphatidylethanolamine from ethanolamine: step 1/3. In terms of biological role, plays a key role in phospholipid biosynthesis by catalyzing the phosphorylation of free choline to phosphocholine, the first step in phosphatidylcholine biosynthesis. Also phosphorylates ethanolamine, thereby contributing to phosphatidylethanolamine biosynthesis. Has higher activity with choline. This isoform plays a key role in lipolysis of lipid droplets following glucose deprivation. In response to glucose deprivation, phosphorylated by AMPK, promoting localization to lipid droplets. Phosphorylation is followed by acetylation by KAT5, leading to dissociation of the homodimer into a monomer. Monomeric CHKA isoform 1 is converted into a tyrosine-protein kinase, which phosphorylates lipid droplet structural proteins PLIN2 and PLIN3, leading to lipolysis of lipid droplets. The polypeptide is Choline kinase alpha (Chka) (Mus musculus (Mouse)).